An 830-amino-acid polypeptide reads, in one-letter code: Periplasmic nitrate reductase (830 aa).

A signal peptide (tat-type signal) is located at residues 1–30 (MTTRREFIKRSAAVTAACTAGISLSGEASN). The 4Fe-4S Mo/W bis-MGD-type domain occupies 40–96 (LKWSKAPCRFCGTGCSVNVAVKDNQVVATHGDIQSEVNRGLNCVKGYFLSKIMYGKD). [4Fe-4S] cluster-binding residues include cysteine 47, cysteine 50, cysteine 54, and cysteine 82. Residues lysine 84, glutamine 151, asparagine 176, cysteine 180, 213-220 (WGSNMAEM), 244-248 (STFQH), methionine 374, glutamine 378, asparagine 484, 510-511 (SE), lysine 533, aspartate 560, and 720-729 (TGRVLEHWHS) contribute to the Mo-bis(molybdopterin guanine dinucleotide) site. A substrate-binding site is contributed by tryptophan 796. Residues asparagine 804 and lysine 821 each contribute to the Mo-bis(molybdopterin guanine dinucleotide) site.

The protein belongs to the prokaryotic molybdopterin-containing oxidoreductase family. NasA/NapA/NarB subfamily. In terms of assembly, component of the periplasmic nitrate reductase NapAB complex composed of NapA and NapB. Requires [4Fe-4S] cluster as cofactor. The cofactor is Mo-bis(molybdopterin guanine dinucleotide). Post-translationally, predicted to be exported by the Tat system. The position of the signal peptide cleavage has not been experimentally proven.

The protein resides in the periplasm. It catalyses the reaction 2 Fe(II)-[cytochrome] + nitrate + 2 H(+) = 2 Fe(III)-[cytochrome] + nitrite + H2O. Functionally, catalytic subunit of the periplasmic nitrate reductase complex NapAB. Receives electrons from NapB and catalyzes the reduction of nitrate to nitrite. The polypeptide is Periplasmic nitrate reductase (Hahella chejuensis (strain KCTC 2396)).